A 173-amino-acid polypeptide reads, in one-letter code: Crossover junction endodeoxyribonuclease RuvC (173 aa).

Residues D8, E67, and D139 contribute to the active site. Mg(2+) contacts are provided by D8, E67, and D139.

Belongs to the RuvC family. Homodimer which binds Holliday junction (HJ) DNA. The HJ becomes 2-fold symmetrical on binding to RuvC with unstacked arms; it has a different conformation from HJ DNA in complex with RuvA. In the full resolvosome a probable DNA-RuvA(4)-RuvB(12)-RuvC(2) complex forms which resolves the HJ. Mg(2+) serves as cofactor.

It is found in the cytoplasm. The enzyme catalyses Endonucleolytic cleavage at a junction such as a reciprocal single-stranded crossover between two homologous DNA duplexes (Holliday junction).. The RuvA-RuvB-RuvC complex processes Holliday junction (HJ) DNA during genetic recombination and DNA repair. Endonuclease that resolves HJ intermediates. Cleaves cruciform DNA by making single-stranded nicks across the HJ at symmetrical positions within the homologous arms, yielding a 5'-phosphate and a 3'-hydroxyl group; requires a central core of homology in the junction. The consensus cleavage sequence is 5'-(A/T)TT(C/G)-3'. Cleavage occurs on the 3'-side of the TT dinucleotide at the point of strand exchange. HJ branch migration catalyzed by RuvA-RuvB allows RuvC to scan DNA until it finds its consensus sequence, where it cleaves and resolves the cruciform DNA. This Sodalis glossinidius (strain morsitans) protein is Crossover junction endodeoxyribonuclease RuvC.